We begin with the raw amino-acid sequence, 605 residues long: ATP-dependent RNA helicase DBP3 (605 aa).

Positions 1 to 124 (MSAEELVASP…TPALSKKQQK (124 aa)) are disordered. Basic residues predominate over residues 54–66 (KDKKDKKEKKDKK). Over residues 104-114 (PVSTATPTESE) the composition is skewed to polar residues. Residues 175–201 (LSIRDLPINSKLQPFLNKFEKPTPIQA) carry the Q motif motif. The Helicase ATP-binding domain maps to 204–391 (WPALLSKKDV…STFLNNPLRI (188 aa)). 217-224 (AETGSGKT) is an ATP binding site. The short motif at 336 to 339 (DEAD) is the DEAD box element. In terms of domain architecture, Helicase C-terminal spans 424–575 (HLKAHLKVHP…EIPKEMDRFP (152 aa)).

Belongs to the DEAD box helicase family. DDX5/DBP2 subfamily.

It localises to the nucleus. Its subcellular location is the nucleolus. The catalysed reaction is ATP + H2O = ADP + phosphate + H(+). Its function is as follows. ATP-dependent RNA helicase required for 60S ribosomal subunit synthesis. Involved in efficient pre-rRNA processing, predominantly at site A3, which is necessary for the normal formation of 25S and 5.8S rRNAs. This is ATP-dependent RNA helicase DBP3 (DBP3) from Cryptococcus neoformans var. neoformans serotype D (strain JEC21 / ATCC MYA-565) (Filobasidiella neoformans).